Consider the following 360-residue polypeptide: Putative transport protein BU123 (360 aa).

The next 9 helical transmembrane spans lie at 18–38, 39–59, 66–86, 161–181, 204–224, 230–250, 251–271, 280–300, and 316–336; these read IFIVSMGVISFLVIHPFILGF, FWASMIVIATWPLMLKIQKIL, AVIIMIIILLLLFIIPVFFLV, GLFIVHSILMLFFSALLYWNG, LLLATQAVRAVALGVAVTALI, GIGLLVSGVPYWALLMIIIFF, SCLIQLGPLPILIPSIIWLYW, ILLIWSCFVFILDHILRPFFI, and IGGLLTFGMIGLFIGPVVLVI.

This sequence belongs to the autoinducer-2 exporter (AI-2E) (TC 2.A.86) family.

It localises to the cell membrane. The protein is Putative transport protein BU123 of Buchnera aphidicola subsp. Acyrthosiphon pisum (strain APS) (Acyrthosiphon pisum symbiotic bacterium).